Here is a 940-residue protein sequence, read N- to C-terminus: Coatomer subunit beta (940 aa).

HEAT repeat units follow at residues 11–48, 90–125, 126–162, and 310–347; these read FLEA…NGDS, QEMI…KEPE, LLDP…VSNH, and SILE…SRNV.

In terms of assembly, oligomeric complex that consists of at least the alpha, beta, beta', gamma, delta, epsilon and zeta subunits.

It localises to the cytoplasm. The protein resides in the golgi apparatus membrane. The protein localises to the cytoplasmic vesicle. Its subcellular location is the COPI-coated vesicle membrane. In terms of biological role, the coatomer is a cytosolic protein complex that binds to dilysine motifs and reversibly associates with Golgi non-clathrin-coated vesicles, which further mediate biosynthetic protein transport from the ER, via the Golgi up to the trans Golgi network. Coatomer complex is required for budding from Golgi membranes, and is essential for the retrograde Golgi-to-ER transport of dilysine-tagged proteins. The polypeptide is Coatomer subunit beta (sec26) (Schizosaccharomyces pombe (strain 972 / ATCC 24843) (Fission yeast)).